We begin with the raw amino-acid sequence, 395 residues long: uncharacterized protein (395 aa).

Belongs to the UDP-glycosyltransferase family.

This is an uncharacterized protein from Bacillus subtilis (strain 168).